The following is a 232-amino-acid chain: Small ribosomal subunit protein uS3 (232 aa).

Positions 39-107 constitute a KH type-2 domain; the sequence is VRQFLTKELS…PAQINIAEVR (69 aa).

This sequence belongs to the universal ribosomal protein uS3 family. Part of the 30S ribosomal subunit. Forms a tight complex with proteins S10 and S14.

Binds the lower part of the 30S subunit head. Binds mRNA in the 70S ribosome, positioning it for translation. This is Small ribosomal subunit protein uS3 from Sodalis glossinidius (strain morsitans).